The chain runs to 281 residues: Protein synthesis inhibitor I (281 aa).

Position 2 is an N-acetylalanine (Ala2). The active site involves Glu175.

Belongs to the ribosome-inactivating protein family. Type 1 RIP subfamily.

The protein localises to the cytoplasm. It catalyses the reaction Endohydrolysis of the N-glycosidic bond at one specific adenosine on the 28S rRNA.. Inhibits the elongation phase of protein synthesis. It inactivates fungal ribosomes even more effectively than mammalian ribosomes and is thought to function as a constitutive antifungal agent in plants. The sequence is that of Protein synthesis inhibitor I (RIP30) from Hordeum vulgare (Barley).